The following is a 31-amino-acid chain: Diuretic hormone class 2 (31 aa).

Residue proline 31 is modified to Proline amide.

The protein belongs to the diuretic hormone class 2 family.

Its subcellular location is the secreted. Its function is as follows. Regulation of fluid secretion. Stimulates primary urine secretion by Malpighian tubules and causes a dose-dependent stimulation of cAMP levels in the tubules. Has a nonselective effect on Na(+)/K(+) ion transport. In vitro, primarily elevates intracellular Ca(2+). The sequence is that of Diuretic hormone class 2 from Apis mellifera (Honeybee).